The primary structure comprises 245 residues: Chromosome partition protein MukE (245 aa).

The segment at 213-245 (PESIAAEKATADDESAVSNEEDFEYDDNQEGAE) is disordered. Residues 224–245 (DDESAVSNEEDFEYDDNQEGAE) show a composition bias toward acidic residues.

The protein belongs to the MukE family. In terms of assembly, interacts, and probably forms a ternary complex, with MukF and MukB. The complex formation is stimulated by calcium or magnesium.

It localises to the cytoplasm. It is found in the nucleoid. Its function is as follows. Involved in chromosome condensation, segregation and cell cycle progression. May participate in facilitating chromosome segregation by condensation DNA from both sides of a centrally located replisome during cell division. Probably acts via its interaction with MukB and MukF. The polypeptide is Chromosome partition protein MukE (Actinobacillus succinogenes (strain ATCC 55618 / DSM 22257 / CCUG 43843 / 130Z)).